Reading from the N-terminus, the 914-residue chain is UPF0182 protein Syncc9605_1323 (914 aa).

9 helical membrane passes run 4 to 24, 37 to 57, 81 to 101, 123 to 143, 152 to 172, 195 to 215, 240 to 260, 285 to 305, and 312 to 332; these read LLLL…WLWF, WLLQ…ARAW, IALL…LDLL, RIGS…MTWL, IVAA…SLAL, FAGL…TLVF, MRLI…LVWL, LPLR…LLLP, and QFLA…TPLT.

Belongs to the UPF0182 family.

The protein localises to the cell membrane. This Synechococcus sp. (strain CC9605) protein is UPF0182 protein Syncc9605_1323.